Reading from the N-terminus, the 325-residue chain is N-acetyl-gamma-glutamyl-phosphate reductase (325 aa).

The active site involves C135.

Belongs to the NAGSA dehydrogenase family. Type 1 subfamily.

It is found in the cytoplasm. The catalysed reaction is N-acetyl-L-glutamate 5-semialdehyde + phosphate + NADP(+) = N-acetyl-L-glutamyl 5-phosphate + NADPH + H(+). Its pathway is amino-acid biosynthesis; L-arginine biosynthesis; N(2)-acetyl-L-ornithine from L-glutamate: step 3/4. In terms of biological role, catalyzes the NADPH-dependent reduction of N-acetyl-5-glutamyl phosphate to yield N-acetyl-L-glutamate 5-semialdehyde. This chain is N-acetyl-gamma-glutamyl-phosphate reductase, found in Flavobacterium johnsoniae (strain ATCC 17061 / DSM 2064 / JCM 8514 / BCRC 14874 / CCUG 350202 / NBRC 14942 / NCIMB 11054 / UW101) (Cytophaga johnsonae).